A 541-amino-acid chain; its full sequence is Chaperonin GroEL (541 aa).

ATP is bound by residues T29–P32, D86–T90, G413, D477–L479, and D493.

This sequence belongs to the chaperonin (HSP60) family. In terms of assembly, forms a cylinder of 14 subunits composed of two heptameric rings stacked back-to-back. Interacts with the co-chaperonin GroES.

The protein resides in the cytoplasm. It catalyses the reaction ATP + H2O + a folded polypeptide = ADP + phosphate + an unfolded polypeptide.. Functionally, together with its co-chaperonin GroES, plays an essential role in assisting protein folding. The GroEL-GroES system forms a nano-cage that allows encapsulation of the non-native substrate proteins and provides a physical environment optimized to promote and accelerate protein folding. The polypeptide is Chaperonin GroEL (Clostridium botulinum (strain 657 / Type Ba4)).